A 1380-amino-acid polypeptide reads, in one-letter code: DNA-directed RNA polymerase subunit beta (1380 aa).

It belongs to the RNA polymerase beta chain family. As to quaternary structure, the RNAP catalytic core consists of 2 alpha, 1 beta, 1 beta' and 1 omega subunit. When a sigma factor is associated with the core the holoenzyme is formed, which can initiate transcription.

The enzyme catalyses RNA(n) + a ribonucleoside 5'-triphosphate = RNA(n+1) + diphosphate. Functionally, DNA-dependent RNA polymerase catalyzes the transcription of DNA into RNA using the four ribonucleoside triphosphates as substrates. The chain is DNA-directed RNA polymerase subunit beta from Sinorhizobium fredii (strain NBRC 101917 / NGR234).